The sequence spans 244 residues: Uridylate kinase (244 aa).

Residue 15–18 (KLSG) coordinates ATP. The involved in allosteric activation by GTP stretch occupies residues 23 to 28 (GSEGFG). Residue Gly57 participates in UMP binding. Residues Gly58 and Arg62 each coordinate ATP. Residues Asp77 and 138–145 (TGNPFFTT) contribute to the UMP site. ATP is bound by residues Thr165, Phe171, and Asp174.

Belongs to the UMP kinase family. Homohexamer.

It is found in the cytoplasm. The enzyme catalyses UMP + ATP = UDP + ADP. The protein operates within pyrimidine metabolism; CTP biosynthesis via de novo pathway; UDP from UMP (UMPK route): step 1/1. With respect to regulation, allosterically activated by GTP. Inhibited by UTP. In terms of biological role, catalyzes the reversible phosphorylation of UMP to UDP. In Aeromonas hydrophila subsp. hydrophila (strain ATCC 7966 / DSM 30187 / BCRC 13018 / CCUG 14551 / JCM 1027 / KCTC 2358 / NCIMB 9240 / NCTC 8049), this protein is Uridylate kinase.